Reading from the N-terminus, the 186-residue chain is ATP synthase subunit b, chloroplastic (186 aa).

The helical transmembrane segment at 26–44 (ILETNLINLGVVIGTLLYF) threads the bilayer.

It belongs to the ATPase B chain family. As to quaternary structure, F-type ATPases have 2 components, F(1) - the catalytic core - and F(0) - the membrane proton channel. F(1) has five subunits: alpha(3), beta(3), gamma(1), delta(1), epsilon(1). F(0) has four main subunits: a(1), b(1), b'(1) and c(10-14). The alpha and beta chains form an alternating ring which encloses part of the gamma chain. F(1) is attached to F(0) by a central stalk formed by the gamma and epsilon chains, while a peripheral stalk is formed by the delta, b and b' chains.

The protein localises to the plastid. Its subcellular location is the chloroplast thylakoid membrane. Its function is as follows. F(1)F(0) ATP synthase produces ATP from ADP in the presence of a proton or sodium gradient. F-type ATPases consist of two structural domains, F(1) containing the extramembraneous catalytic core and F(0) containing the membrane proton channel, linked together by a central stalk and a peripheral stalk. During catalysis, ATP synthesis in the catalytic domain of F(1) is coupled via a rotary mechanism of the central stalk subunits to proton translocation. Functionally, component of the F(0) channel, it forms part of the peripheral stalk, linking F(1) to F(0). This chain is ATP synthase subunit b, chloroplastic, found in Chara vulgaris (Common stonewort).